Reading from the N-terminus, the 114-residue chain is Cytochrome c oxidase subunit 4B (114 aa).

3 consecutive transmembrane segments (helical) span residues 29–49 (QIVV…AVAT), 56–76 (FAIP…LFFF), and 89–109 (AFMI…MLLL).

The protein belongs to the cytochrome c oxidase bacterial subunit 4 family.

It localises to the cell membrane. The catalysed reaction is 4 Fe(II)-[cytochrome c] + O2 + 8 H(+)(in) = 4 Fe(III)-[cytochrome c] + 2 H2O + 4 H(+)(out). This is Cytochrome c oxidase subunit 4B (ctaF) from Alkalihalophilus pseudofirmus (strain ATCC BAA-2126 / JCM 17055 / OF4) (Bacillus pseudofirmus).